A 337-amino-acid polypeptide reads, in one-letter code: Ketol-acid reductoisomerase (NADP(+)) (337 aa).

The KARI N-terminal Rossmann domain maps to 3–183; sequence IELFYDADAD…GGGRAGIIPT (181 aa). NADP(+)-binding positions include 26-29, arginine 49, serine 52, serine 54, and 84-87; these read YGSQ and DTSQ. The active site involves histidine 109. Glycine 135 is an NADP(+) binding site. In terms of domain architecture, KARI C-terminal knotted spans 184-329; it reads TFEAETVTDL…AKLRDLMSWV (146 aa). Residues aspartate 192, glutamate 196, glutamate 228, and glutamate 232 each coordinate Mg(2+). Serine 253 lines the substrate pocket.

It belongs to the ketol-acid reductoisomerase family. The cofactor is Mg(2+).

The enzyme catalyses (2R)-2,3-dihydroxy-3-methylbutanoate + NADP(+) = (2S)-2-acetolactate + NADPH + H(+). The catalysed reaction is (2R,3R)-2,3-dihydroxy-3-methylpentanoate + NADP(+) = (S)-2-ethyl-2-hydroxy-3-oxobutanoate + NADPH + H(+). The protein operates within amino-acid biosynthesis; L-isoleucine biosynthesis; L-isoleucine from 2-oxobutanoate: step 2/4. Its pathway is amino-acid biosynthesis; L-valine biosynthesis; L-valine from pyruvate: step 2/4. Its function is as follows. Involved in the biosynthesis of branched-chain amino acids (BCAA). Catalyzes an alkyl-migration followed by a ketol-acid reduction of (S)-2-acetolactate (S2AL) to yield (R)-2,3-dihydroxy-isovalerate. In the isomerase reaction, S2AL is rearranged via a Mg-dependent methyl migration to produce 3-hydroxy-3-methyl-2-ketobutyrate (HMKB). In the reductase reaction, this 2-ketoacid undergoes a metal-dependent reduction by NADPH to yield (R)-2,3-dihydroxy-isovalerate. This is Ketol-acid reductoisomerase (NADP(+)) from Corynebacterium efficiens (strain DSM 44549 / YS-314 / AJ 12310 / JCM 11189 / NBRC 100395).